Here is a 714-residue protein sequence, read N- to C-terminus: Protein HAPLESS 2-B (714 aa).

The signal sequence occupies residues 1 to 33 (MAPRRRRRAARSSRPLLLALLAAAVNNFAPAGG). The Extracellular segment spans residues 34–552 (VEVLAKSRLE…FFTGTTCSTR (519 aa)). Intrachain disulfides connect cysteine 45-cysteine 59, cysteine 134-cysteine 164, cysteine 146-cysteine 194, cysteine 165-cysteine 321, cysteine 167-cysteine 177, cysteine 304-cysteine 328, and cysteine 441-cysteine 479. A helical membrane pass occupies residues 553–573 (CWSFLKFVIHGLLLVAVLWLL). Over 574–714 (HRKGLFDPLY…HGDRRHHAWH (141 aa)) the chain is Cytoplasmic. Positions 597–619 (RARRRHKRAHSHRHSHHHDAHKR) are disordered. Basic residues predominate over residues 598-619 (ARRRHKRAHSHRHSHHHDAHKR).

This sequence belongs to the HAP2/GCS1 family.

The protein resides in the endoplasmic reticulum membrane. Its subcellular location is the cell membrane. Required for male fertility. Plays a role in pollen tube guidance and successful gamete attachment. Essential for the fusion of gametes during double fertilization, where one male gamete fuses with the egg to produce a zygote, and another male gamete fuses with the central cell to produce the endosperm. Mediates the fusion of cell membranes. Not required for pollen tube outgrowth. In Oryza sativa subsp. japonica (Rice), this protein is Protein HAPLESS 2-B (HAP2B).